The following is a 516-amino-acid chain: Na(+)/H(+) antiporter NhaB (516 aa).

Helical transmembrane passes span 23-43, 61-80, 97-117, 120-140, 144-164, 202-222, 238-258, 303-323, 348-368, 391-411, 447-467, and 475-495; these read LALIIFLIVNPLVFAVAPFVA, CYPLLPGGLLAIEALLIGMT, LLLIFMVAGIYFMKQLLLFVF, LLLGIRSKMLLSLAFCLAAAF, FLDALTVVAVVISVAVGFYGI, LMMHAGVGTALGGVMTMVGEP, FFIRMAPVTVPVMVCGLLTCL, AVIGVWLIVALAFHLAEVGLI, TEALPFTALLTVFFAIVAVII, LFYLFNGLLSSISDNVFVGTV, ATPNGQAAFLFLLTSALAPLI, and VWMALPYTLVLTLVGLLCVEF.

The protein belongs to the NhaB Na(+)/H(+) (TC 2.A.34) antiporter family.

The protein localises to the cell inner membrane. The enzyme catalyses 2 Na(+)(in) + 3 H(+)(out) = 2 Na(+)(out) + 3 H(+)(in). Its function is as follows. Na(+)/H(+) antiporter that extrudes sodium in exchange for external protons. This chain is Na(+)/H(+) antiporter NhaB, found in Klebsiella pneumoniae (strain 342).